A 301-amino-acid chain; its full sequence is UDP-N-acetylenolpyruvoylglucosamine reductase (301 aa).

The FAD-binding PCMH-type domain maps to 30–194; the sequence is VGGEADYLVF…LSVKFALAPG (165 aa). R173 is a catalytic residue. S223 (proton donor) is an active-site residue. E293 is a catalytic residue.

The protein belongs to the MurB family. Requires FAD as cofactor.

Its subcellular location is the cytoplasm. The enzyme catalyses UDP-N-acetyl-alpha-D-muramate + NADP(+) = UDP-N-acetyl-3-O-(1-carboxyvinyl)-alpha-D-glucosamine + NADPH + H(+). The protein operates within cell wall biogenesis; peptidoglycan biosynthesis. Cell wall formation. The polypeptide is UDP-N-acetylenolpyruvoylglucosamine reductase (Streptococcus pneumoniae (strain Hungary19A-6)).